A 138-amino-acid chain; its full sequence is Large ribosomal subunit protein uL16 (138 aa).

The span at methionine 1–glutamine 13 shows a compositional bias: basic residues. The tract at residues methionine 1–threonine 22 is disordered.

Belongs to the universal ribosomal protein uL16 family. As to quaternary structure, part of the 50S ribosomal subunit.

Its function is as follows. Binds 23S rRNA and is also seen to make contacts with the A and possibly P site tRNAs. In Delftia acidovorans (strain DSM 14801 / SPH-1), this protein is Large ribosomal subunit protein uL16.